The following is a 244-amino-acid chain: Pyridoxine 5'-phosphate synthase (244 aa).

Asn12 is a binding site for 3-amino-2-oxopropyl phosphate. 14-15 contributes to the 1-deoxy-D-xylulose 5-phosphate binding site; the sequence is DH. 3-amino-2-oxopropyl phosphate is bound at residue Arg23. The active-site Proton acceptor is the His48. 1-deoxy-D-xylulose 5-phosphate contacts are provided by Arg50 and His55. Glu75 serves as the catalytic Proton acceptor. Thr105 is a binding site for 1-deoxy-D-xylulose 5-phosphate. The active-site Proton donor is His196. Residues Gly197 and 218–219 each bind 3-amino-2-oxopropyl phosphate; that span reads GH.

Belongs to the PNP synthase family. Homooctamer; tetramer of dimers.

Its subcellular location is the cytoplasm. It carries out the reaction 3-amino-2-oxopropyl phosphate + 1-deoxy-D-xylulose 5-phosphate = pyridoxine 5'-phosphate + phosphate + 2 H2O + H(+). It functions in the pathway cofactor biosynthesis; pyridoxine 5'-phosphate biosynthesis; pyridoxine 5'-phosphate from D-erythrose 4-phosphate: step 5/5. In terms of biological role, catalyzes the complicated ring closure reaction between the two acyclic compounds 1-deoxy-D-xylulose-5-phosphate (DXP) and 3-amino-2-oxopropyl phosphate (1-amino-acetone-3-phosphate or AAP) to form pyridoxine 5'-phosphate (PNP) and inorganic phosphate. This chain is Pyridoxine 5'-phosphate synthase, found in Alcanivorax borkumensis (strain ATCC 700651 / DSM 11573 / NCIMB 13689 / SK2).